A 239-amino-acid chain; its full sequence is Peptidyl-tRNA hydrolase (239 aa).

Residue Y14 coordinates tRNA. H19 serves as the catalytic Proton acceptor. TRNA is bound by residues F64, N66, and N112.

It belongs to the PTH family. Monomer.

It is found in the cytoplasm. It catalyses the reaction an N-acyl-L-alpha-aminoacyl-tRNA + H2O = an N-acyl-L-amino acid + a tRNA + H(+). In terms of biological role, hydrolyzes ribosome-free peptidyl-tRNAs (with 1 or more amino acids incorporated), which drop off the ribosome during protein synthesis, or as a result of ribosome stalling. Its function is as follows. Catalyzes the release of premature peptidyl moieties from peptidyl-tRNA molecules trapped in stalled 50S ribosomal subunits, and thus maintains levels of free tRNAs and 50S ribosomes. The chain is Peptidyl-tRNA hydrolase from Rhizobium meliloti (strain 1021) (Ensifer meliloti).